A 38-amino-acid polypeptide reads, in one-letter code: Photosystem II reaction center protein Y (38 aa).

A helical transmembrane segment spans residues Ile2–Ile20.

This sequence belongs to the PsbY family. As to quaternary structure, PSII is composed of 1 copy each of membrane proteins PsbA, PsbB, PsbC, PsbD, PsbE, PsbF, PsbH, PsbI, PsbJ, PsbK, PsbL, PsbM, PsbT, PsbX, PsbY, Psb30/Ycf12, peripheral proteins PsbO, CyanoQ (PsbQ), PsbU, PsbV and a large number of cofactors. It forms dimeric complexes.

The protein localises to the cellular thylakoid membrane. Functionally, loosely associated component of the core of photosystem II (PSII), it is not always seen in crystals. PSII is a light-driven water plastoquinone oxidoreductase, using light energy to abstract electrons from H(2)O, generating a proton gradient subsequently used for ATP formation. This Prochlorococcus marinus (strain MIT 9313) protein is Photosystem II reaction center protein Y.